Reading from the N-terminus, the 333-residue chain is Glycerol-3-phosphate dehydrogenase [NAD(P)+] (333 aa).

S10, W11, H31, R32, and K105 together coordinate NADPH. K105, G136, and S138 together coordinate sn-glycerol 3-phosphate. An NADPH-binding site is contributed by A140. Residues K191, D244, S254, R255, and N256 each coordinate sn-glycerol 3-phosphate. The active-site Proton acceptor is K191. Residue R255 coordinates NADPH. I279 and E281 together coordinate NADPH.

It belongs to the NAD-dependent glycerol-3-phosphate dehydrogenase family.

It is found in the cytoplasm. It catalyses the reaction sn-glycerol 3-phosphate + NAD(+) = dihydroxyacetone phosphate + NADH + H(+). The catalysed reaction is sn-glycerol 3-phosphate + NADP(+) = dihydroxyacetone phosphate + NADPH + H(+). Its pathway is membrane lipid metabolism; glycerophospholipid metabolism. Functionally, catalyzes the reduction of the glycolytic intermediate dihydroxyacetone phosphate (DHAP) to sn-glycerol 3-phosphate (G3P), the key precursor for phospholipid synthesis. The sequence is that of Glycerol-3-phosphate dehydrogenase [NAD(P)+] from Chlorobium luteolum (strain DSM 273 / BCRC 81028 / 2530) (Pelodictyon luteolum).